The chain runs to 748 residues: Histone-lysine N-methyltransferase EZH2 (748 aa).

Positions 183 to 199 (DYEDDEDGEDNQDDERD) are enriched in acidic residues. Disordered stretches follow at residues 183 to 215 (DYED…KETL) and 347 to 428 (TPPK…NIEP). A compositionally biased stretch (basic and acidic residues) spans 200–215 (DITKDQDDNMEEKETL). The segment covering 348–359 (PPKRPSGRRRGR) has biased composition (basic residues). Over residues 376–387 (EAKDTDSDREAG) the composition is skewed to basic and acidic residues. One can recognise a CXC domain in the interval 505–607 (CRKIQLKKDG…SKNVSCKNCS (103 aa)). The 116-residue stretch at 614–729 (KHLLLAPSDV…TGEELFFDYR (116 aa)) folds into the SET domain.

It belongs to the class V-like SAM-binding methyltransferase superfamily. Histone-lysine methyltransferase family. EZ subfamily. In terms of assembly, component of the prc2/eed-ezh2 complex.

It is found in the nucleus. It catalyses the reaction L-lysyl(27)-[histone H3] + 3 S-adenosyl-L-methionine = N(6),N(6),N(6)-trimethyl-L-lysyl(27)-[histone H3] + 3 S-adenosyl-L-homocysteine + 3 H(+). Functionally, polycomb group (PcG) protein. Catalytic subunit of the prc2/eed-ezh2 complex, which methylates 'Lys-9' and 'Lys-27' of histone H3, leading to transcriptional repression of the affected target gene. May regulate the circadian clock via histone methylation at the promoter of the circadian genes. The sequence is that of Histone-lysine N-methyltransferase EZH2 (ezh2-b) from Xenopus laevis (African clawed frog).